Consider the following 291-residue polypeptide: MTSSYLHFPDFDPVIFSIGPVALHWYGLMYLVGFVFAMWLAVRRANRPGSGWTKNEVENLLYAGFLGVFLGGRIGYVLFYNFPLFLDNPLYLFRVWDGGMSFHGGLIGVILVMIIFARRTKRSFFQVSDFIAPLIPFGLGAGRLGNFINGELWGRVDPDFRFAMLFPGSRAEDIALLPSHPQWQPIFDTYGVLPRHPSQLYELALEGVVLFIILNLFIRKPRPMGAVSGLFLIGYGAFRIIVEFFRQPDAQFTGAWVQYISMGQILSIPMIIAGAIMMVWAYRRRPQQHVS.

The next 7 membrane-spanning stretches (helical) occupy residues 21–41 (VALH…MWLA), 60–80 (LLYA…VLFY), 96–116 (WDGG…MIIF), 130–150 (FIAP…FING), 198–218 (SQLY…NLFI), 225–245 (GAVS…VEFF), and 260–280 (ISMG…MMVW). R143 serves as a coordination point for a 1,2-diacyl-sn-glycero-3-phospho-(1'-sn-glycerol).

This sequence belongs to the Lgt family.

The protein localises to the cell inner membrane. It carries out the reaction L-cysteinyl-[prolipoprotein] + a 1,2-diacyl-sn-glycero-3-phospho-(1'-sn-glycerol) = an S-1,2-diacyl-sn-glyceryl-L-cysteinyl-[prolipoprotein] + sn-glycerol 1-phosphate + H(+). It participates in protein modification; lipoprotein biosynthesis (diacylglyceryl transfer). Its function is as follows. Catalyzes the transfer of the diacylglyceryl group from phosphatidylglycerol to the sulfhydryl group of the N-terminal cysteine of a prolipoprotein, the first step in the formation of mature lipoproteins. The sequence is that of Phosphatidylglycerol--prolipoprotein diacylglyceryl transferase from Salmonella agona (strain SL483).